A 151-amino-acid polypeptide reads, in one-letter code: S-protein homolog 1 (151 aa).

The N-terminal stretch at 1 to 18 (MNCIKQFLLAICFSLALT) is a signal peptide.

Belongs to the plant self-incompatibility (S1) protein family. In terms of tissue distribution, restricted to floral tissues.

It is found in the secreted. The chain is S-protein homolog 1 from Arabidopsis thaliana (Mouse-ear cress).